A 509-amino-acid polypeptide reads, in one-letter code: Ethanolamine-phosphate phospho-lyase (509 aa).

Lysine 279 carries the post-translational modification N6-(pyridoxal phosphate)lysine. Positions 451-474 are enriched in basic and acidic residues; the sequence is EKTSAKRKVHNENSGDTNAKEKET. Residues 451 to 509 form a disordered region; sequence EKTSAKRKVHNENSGDTNAKEKETCSSNSQERNPNDHAYRQSNGLHPESPTFTRKRIRT.

It belongs to the class-III pyridoxal-phosphate-dependent aminotransferase family. In terms of assembly, homotetramer. The cofactor is pyridoxal 5'-phosphate.

The protein resides in the mitochondrion. The enzyme catalyses phosphoethanolamine + H2O = acetaldehyde + NH4(+) + phosphate. Functionally, catalyzes the pyridoxal-phosphate-dependent breakdown of phosphoethanolamine, converting it to ammonia, inorganic phosphate and acetaldehyde. In Xenopus laevis (African clawed frog), this protein is Ethanolamine-phosphate phospho-lyase (etnppl).